Here is a 74-residue protein sequence, read N- to C-terminus: Benzylsuccinate synthase beta subunit (74 aa).

In terms of assembly, heterohexamer composed of 2 alpha subunits, 2 beta subunits and 2 gamma subunits.

The enzyme catalyses toluene + fumarate = 2-benzylsuccinate. The protein operates within xenobiotic degradation; toluene degradation. Activated by the benzylsuccinate synthase activating enzyme BssD. Rapidly inactivated by oxygen. In terms of biological role, catalyzes the addition of fumarate to the methyl group of toluene, leading to the formation of benzylsuccinate. In Thauera aromatica, this protein is Benzylsuccinate synthase beta subunit (bssB).